A 426-amino-acid polypeptide reads, in one-letter code: Tol-Pal system protein TolB (426 aa).

Residues 1 to 25 form the signal peptide; sequence MNILLSRFRLLLAAALAALSWGAQA.

Belongs to the TolB family. As to quaternary structure, the Tol-Pal system is composed of five core proteins: the inner membrane proteins TolA, TolQ and TolR, the periplasmic protein TolB and the outer membrane protein Pal. They form a network linking the inner and outer membranes and the peptidoglycan layer.

The protein localises to the periplasm. Functionally, part of the Tol-Pal system, which plays a role in outer membrane invagination during cell division and is important for maintaining outer membrane integrity. The polypeptide is Tol-Pal system protein TolB (Aromatoleum aromaticum (strain DSM 19018 / LMG 30748 / EbN1) (Azoarcus sp. (strain EbN1))).